Here is a 724-residue protein sequence, read N- to C-terminus: Catalase-peroxidase (724 aa).

A cross-link (tryptophyl-tyrosyl-methioninium (Trp-Tyr) (with M-252)) is located at residues 98–226; the sequence is WHSAGSYRLA…LAAVQMGLIY (129 aa). His-99 (proton acceptor) is an active-site residue. The tryptophyl-tyrosyl-methioninium (Tyr-Met) (with W-98) cross-link spans 226 to 252; it reads YVNPEGVNGKPDPLKTAAQVRTTFARM. His-267 serves as a coordination point for heme b.

This sequence belongs to the peroxidase family. Peroxidase/catalase subfamily. In terms of assembly, homodimer or homotetramer. It depends on heme b as a cofactor. Post-translationally, formation of the three residue Trp-Tyr-Met cross-link is important for the catalase, but not the peroxidase activity of the enzyme.

It carries out the reaction H2O2 + AH2 = A + 2 H2O. It catalyses the reaction 2 H2O2 = O2 + 2 H2O. Its function is as follows. Bifunctional enzyme with both catalase and broad-spectrum peroxidase activity. This Maricaulis maris (strain MCS10) (Caulobacter maris) protein is Catalase-peroxidase.